The following is a 518-amino-acid chain: Glutamate--cysteine ligase (518 aa).

It belongs to the glutamate--cysteine ligase type 1 family. Type 1 subfamily.

It catalyses the reaction L-cysteine + L-glutamate + ATP = gamma-L-glutamyl-L-cysteine + ADP + phosphate + H(+). The protein operates within sulfur metabolism; glutathione biosynthesis; glutathione from L-cysteine and L-glutamate: step 1/2. In Escherichia coli O157:H7, this protein is Glutamate--cysteine ligase.